The chain runs to 98 residues: Large ribosomal subunit protein bL27 (98 aa).

A propeptide spanning residues 1–9 (MLKMNLQLF) is cleaved from the precursor.

This sequence belongs to the bacterial ribosomal protein bL27 family. The N-terminus is cleaved by ribosomal processing cysteine protease Prp.

This Desulfitobacterium hafniense (strain DSM 10664 / DCB-2) protein is Large ribosomal subunit protein bL27.